The sequence spans 354 residues: Ion-translocating oxidoreductase complex subunit D (354 aa).

The next 5 helical transmembrane spans lie at 19–39 (IMLWVILAMLPAIFAQLYYFG), 40–60 (FGVLFQITIAVVFALCLEFLV), 70–89 (FYISDFSVTLTALILAVAIP), 94–116 (YWIILIGIFCAVILGKHVYGGLG), and 123–143 (AMVGYVVLLVSFPMQMTTWLA). T186 is modified (FMN phosphoryl threonine). The next 5 helical transmembrane spans lie at 215 to 235 (LAGLGWFQVNLAFLLGGLFLV), 242 to 262 (WQIPTALLITVCLFSLCSWLF), 266 to 286 (MPSPLWQLFSGATMFCAFFIA), 300 to 320 (LVFGVLVGLLLCLIRFYGGYP), and 321 to 341 (DGAAFAILLANICVPLIDQYT).

Belongs to the NqrB/RnfD family. As to quaternary structure, the complex is composed of six subunits: RnfA, RnfB, RnfC, RnfD, RnfE and RnfG. It depends on FMN as a cofactor.

Its subcellular location is the cell inner membrane. Its function is as follows. Part of a membrane-bound complex that couples electron transfer with translocation of ions across the membrane. The sequence is that of Ion-translocating oxidoreductase complex subunit D from Mannheimia succiniciproducens (strain KCTC 0769BP / MBEL55E).